The following is a 275-amino-acid chain: D-apionate oxidoisomerase (275 aa).

NAD(+) contacts are provided by residues G11–M13, E32, and D68. 2 residues coordinate Zn(2+): H113 and E183.

The protein belongs to the ApnO family. It depends on Zn(2+) as a cofactor.

The catalysed reaction is D-apionate + NAD(+) = 3-oxoisoapionate + NADH + H(+). It participates in carbohydrate metabolism. Its function is as follows. Involved in catabolism of D-apiose. Catalyzes the conversion of D-apionate to 3-oxo-isoapionate. In Rhizobium rhizogenes (strain K84 / ATCC BAA-868) (Agrobacterium radiobacter), this protein is D-apionate oxidoisomerase.